A 95-amino-acid polypeptide reads, in one-letter code: Ribosome-binding factor A (95 aa).

Belongs to the RbfA family. Interacts with the 30S ribosomal subunit as a monomer, binding in a position overlapping the sites of the A and P site tRNAs, and displacing segments of the 16S rRNA. Probably contacts 16S rRNA and ribosomal protein S9 and S13.

The protein localises to the cytoplasm. Its function is as follows. One of several proteins that assist in the late maturation steps of the functional core of the 30S ribosomal subunit. Associates with free 30S ribosomal subunits (but not with 30S subunits that are part of 70S ribosomes or polysomes). Required for efficient processing of 16S rRNA. Probably interacts with the 5'-terminal helix region of 16S rRNA, bringing together different domains of the 30S ribosomal subunit which aids assembly. The chain is Ribosome-binding factor A from Thermus thermophilus (strain ATCC 27634 / DSM 579 / HB8).